A 557-amino-acid polypeptide reads, in one-letter code: Polypyrimidine tract-binding protein 1 (557 aa).

An N-acetylmethionine modification is found at M1. S16 is subject to Phosphoserine. 3 consecutive RRM domains span residues 59–143, 184–260, and 363–437; these read RVIH…SSPN, LRII…FSKL, and SVLL…LSKH. A Glycyl lysine isopeptide (Lys-Gly) (interchain with G-Cter in SUMO2) cross-link involves residue K65. The residue at position 127 (Y127) is a Phosphotyrosine. T138 carries the post-translational modification Phosphothreonine. Phosphoserine is present on S141. K218 is covalently cross-linked (Glycyl lysine isopeptide (Lys-Gly) (interchain with G-Cter in SUMO2)). The tract at residues 437-460 is disordered; that stretch reads HQSVQLPREGQEDQGLTKDYGNSP. Phosphoserine is present on S459. In terms of domain architecture, RRM 4 spans 480–555; that stretch reads ATLHLSNIPP…HHLRVSFSKS (76 aa).

As to quaternary structure, monomer. Part of a ternary complex containing KHSRP, PTBP1, PTBP2 and HNRPH1. Interacts with RAVER1 and SFPQ.

The protein resides in the nucleus. Its function is as follows. Plays a role in pre-mRNA splicing and in the regulation of alternative splicing events. Activates exon skipping of its own pre-mRNA during muscle cell differentiation. Binds to the polypyrimidine tract of introns. May promote RNA looping when bound to two separate polypyrimidine tracts in the same pre-mRNA. May promote the binding of U2 snRNP to pre-mRNA. Cooperates with RAVER1 to modulate switching between mutually exclusive exons during maturation of the TPM1 pre-mRNA. Represses the splicing of MAPT/Tau exon 10. Binds to polypyrimidine-rich controlling element (PCE) of CFTR and promotes exon skipping of CFTR exon 9, thereby antagonizing TIA1 and its role in exon inclusion of CFTR exon 9. Plays a role in the splicing of pyruvate kinase PKM by binding repressively to a polypyrimidine tract flanking PKM exon 9, inhibiting exon 9 inclusion and resulting in exon 10 inclusion and production of the PKM M2 isoform. In Bos taurus (Bovine), this protein is Polypyrimidine tract-binding protein 1 (PTBP1).